A 160-amino-acid chain; its full sequence is Large ribosomal subunit protein bL19 (160 aa).

2 stretches are compositionally biased toward basic and acidic residues: residues 1-15 (MTED…KEES) and 28-39 (ATRETKPKDSPS). Positions 1–44 (MTEDLKNTSPSKEESNEIEESSKATPKATRETKPKDSPSKTKLS) are disordered.

This sequence belongs to the bacterial ribosomal protein bL19 family.

Functionally, this protein is located at the 30S-50S ribosomal subunit interface and may play a role in the structure and function of the aminoacyl-tRNA binding site. This Prochlorococcus marinus (strain SARG / CCMP1375 / SS120) protein is Large ribosomal subunit protein bL19.